A 302-amino-acid chain; its full sequence is tRNA-cytidine(32) 2-sulfurtransferase (302 aa).

The PP-loop motif signature appears at 45–50 (SGGKDS). Positions 120, 123, and 211 each coordinate [4Fe-4S] cluster.

It belongs to the TtcA family. In terms of assembly, homodimer. Requires Mg(2+) as cofactor. [4Fe-4S] cluster serves as cofactor.

The protein localises to the cytoplasm. It carries out the reaction cytidine(32) in tRNA + S-sulfanyl-L-cysteinyl-[cysteine desulfurase] + AH2 + ATP = 2-thiocytidine(32) in tRNA + L-cysteinyl-[cysteine desulfurase] + A + AMP + diphosphate + H(+). The protein operates within tRNA modification. In terms of biological role, catalyzes the ATP-dependent 2-thiolation of cytidine in position 32 of tRNA, to form 2-thiocytidine (s(2)C32). The sulfur atoms are provided by the cysteine/cysteine desulfurase (IscS) system. The chain is tRNA-cytidine(32) 2-sulfurtransferase from Aeromonas salmonicida (strain A449).